We begin with the raw amino-acid sequence, 948 residues long: Phosphatidylinositol-glycan-specific phospholipase D (948 aa).

The N-terminal stretch at 1 to 24 is a signal peptide; sequence MKNKIILLWLLLIVILCTISNVKG. N-linked (GlcNAc...) asparagine glycosylation is found at Asn-39, Asn-78, Asn-148, Asn-300, Asn-433, Asn-452, Asn-506, and Asn-535. 4 FG-GAP repeats span residues 451 to 512, 526 to 588, 596 to 656, and 663 to 724; these read TNFT…SVTI, QVAT…NPAG, LPSI…RISG, and DADY…LNSF. 2 N-linked (GlcNAc...) asparagine glycosylation sites follow: Asn-749 and Asn-788. 2 FG-GAP repeats span residues 799 to 861 and 895 to 948; these read NLLL…LTND and SSGG…NIFQ.

Belongs to the GPLD1 family. It depends on Ca(2+) as a cofactor.

The protein resides in the secreted. The catalysed reaction is a 6-(alpha-D-glucosaminyl)-1-(1,2-diacyl-sn-glycero-3-phospho)-1D-myo-inositol + H2O = 6-(alpha-D-glucosaminyl)-1D-myo-inositol + a 1,2-diacyl-sn-glycero-3-phosphate + H(+). Functionally, hydrolyzes the inositol phosphate linkage in proteins anchored by phosphatidylinositol glycans (GPI-anchor) thus releasing these proteins from the membrane. May also cleave GPI anchor intermediates intracellularly. The polypeptide is Phosphatidylinositol-glycan-specific phospholipase D (pldG) (Dictyostelium discoideum (Social amoeba)).